The following is a 258-amino-acid chain: Deoxyribose-phosphate aldolase (258 aa).

Asp102 serves as the catalytic Proton donor/acceptor. Lys165 (schiff-base intermediate with acetaldehyde) is an active-site residue. Lys199 (proton donor/acceptor) is an active-site residue.

This sequence belongs to the DeoC/FbaB aldolase family. DeoC type 2 subfamily.

The protein resides in the cytoplasm. It catalyses the reaction 2-deoxy-D-ribose 5-phosphate = D-glyceraldehyde 3-phosphate + acetaldehyde. The protein operates within carbohydrate degradation; 2-deoxy-D-ribose 1-phosphate degradation; D-glyceraldehyde 3-phosphate and acetaldehyde from 2-deoxy-alpha-D-ribose 1-phosphate: step 2/2. In terms of biological role, catalyzes a reversible aldol reaction between acetaldehyde and D-glyceraldehyde 3-phosphate to generate 2-deoxy-D-ribose 5-phosphate. The polypeptide is Deoxyribose-phosphate aldolase (Aliivibrio fischeri (strain MJ11) (Vibrio fischeri)).